We begin with the raw amino-acid sequence, 226 residues long: Putative type II restriction enzyme MjaVIP (226 aa).

It belongs to the BsaWI type II restriction endonuclease family.

The enzyme catalyses Endonucleolytic cleavage of DNA to give specific double-stranded fragments with terminal 5'-phosphates.. Its function is as follows. A P subtype restriction enzyme that recognizes the double-stranded sequence 5'-CCGG-3'; the cleavage site is unknown. This is Putative type II restriction enzyme MjaVIP (mjaVIRP) from Methanocaldococcus jannaschii (strain ATCC 43067 / DSM 2661 / JAL-1 / JCM 10045 / NBRC 100440) (Methanococcus jannaschii).